The following is a 63-amino-acid chain: 2-hydroxymuconate tautomerase (63 aa).

Catalysis depends on Pro2, which acts as the Proton acceptor; via imino nitrogen.

Belongs to the 4-oxalocrotonate tautomerase family. Homohexamer.

It carries out the reaction (2Z,4E)-2-hydroxyhexa-2,4-dienedioate = (3E)-2-oxohex-3-enedioate. It functions in the pathway aromatic compound metabolism; salicylate degradation. In terms of biological role, catalyzes the ketonization of 2-hydroxymuconate stereoselectively to yield 2-oxo-3-hexenedioate. The chain is 2-hydroxymuconate tautomerase (nahJ) from Pseudomonas fluorescens.